Reading from the N-terminus, the 361-residue chain is Chorismate synthase (361 aa).

The NADP(+) site is built by Arg48 and Arg54. FMN is bound by residues 125–127 (RSS), 238–239 (NA), Gly278, 293–297 (KPTSS), and Arg319.

This sequence belongs to the chorismate synthase family. As to quaternary structure, homotetramer. The cofactor is FMNH2.

It carries out the reaction 5-O-(1-carboxyvinyl)-3-phosphoshikimate = chorismate + phosphate. Its pathway is metabolic intermediate biosynthesis; chorismate biosynthesis; chorismate from D-erythrose 4-phosphate and phosphoenolpyruvate: step 7/7. Catalyzes the anti-1,4-elimination of the C-3 phosphate and the C-6 proR hydrogen from 5-enolpyruvylshikimate-3-phosphate (EPSP) to yield chorismate, which is the branch point compound that serves as the starting substrate for the three terminal pathways of aromatic amino acid biosynthesis. This reaction introduces a second double bond into the aromatic ring system. The protein is Chorismate synthase of Klebsiella pneumoniae (strain 342).